The chain runs to 1373 residues: Inactive tyrosine-protein kinase PRAG1 (1373 aa).

Disordered stretches follow at residues 31–50 and 197–235; these read AGHP…LPAR and TSSC…DSEG. A Phosphotyrosine modification is found at Tyr238. Composition is skewed to basic and acidic residues over residues 250-263 and 272-284; these read DAVH…RRGG and QGPR…EEKQ. The tract at residues 250–338 is disordered; that stretch reads DAVHSTEGSG…SGASSPFAPH (89 aa). The segment covering 317-333 has biased composition (low complexity); sequence SSSDGLSCGSSRSGASS. Residues Tyr343 and Tyr391 each carry the phosphotyrosine modification. Disordered stretches follow at residues 376–448 and 468–794; these read QPAS…NPAP and IYLS…LPQK. Polar residues predominate over residues 419–438; it reads SQGQVWTGDTWIQKTPPSWS. Over residues 506 to 522 the composition is skewed to basic and acidic residues; it reads RESHPHNVTENTAKEKP. Residues 526–538 show a composition bias toward low complexity; the sequence is PKLSKSSPGGSPV. Composition is skewed to polar residues over residues 568–578 and 655–670; these read NLTSSCHTNGV and TSGQ…SKSA. Phosphoserine occurs at positions 671 and 720. Polar residues-rich tracts occupy residues 711-721 and 729-740; these read VSQSSAESLSP and SFTTGSTDSLAS. Residues Ser757 and Ser802 each carry the phosphoserine modification. Residues 804 to 823 form a disordered region; the sequence is PDGFFWTQGSPKPRTASPKL. A required for homodimerization region spans residues 911–954; sequence STQLQLHSLLSSISSKEGTYAKLGGLYTQSLARLVTKCEDLFMG. The 352-residue stretch at 945–1296 folds into the Protein kinase domain; sequence VTKCEDLFMG…EAKRVLQCLL (352 aa). Residues 1041–1050 are compositionally biased toward polar residues; it reads LASPDTSSKD. 2 disordered regions span residues 1041-1062 and 1138-1171; these read LASP…PPAQ and QSSP…QGGP. Low complexity predominate over residues 1139–1167; sequence SSPGPSATPTVPTTTSRCPSAAPAATTAC. The tract at residues 1298-1373 is required for homodimerization; that stretch reads GPRRELVEQP…LQSLKLLQLL (76 aa).

It belongs to the protein kinase superfamily. As to quaternary structure, homodimer. Dimerization leads to the catalytic activation of CSK. Interacts (via C-terminus) with RND2. Interacts with CSK (via SH2 domain) in a Tyr-391 phosphorylation-dependent manner; this interaction potentiates kinase activity of CSK. Interacts with NOTCH1 intracellular domain (N1ICD). Forms a complex with PRAG1, N1ICD and MAML1, in a MAML1-dependent manner. Post-translationally, phosphorylated by CSK on Tyr-238, Tyr-343, and Tyr-391; Tyr-391 is a primary site of phosphorylation.

It is found in the cytoplasm. The protein localises to the nucleus. The protein resides in the cell junction. It localises to the focal adhesion. In terms of biological role, catalytically inactive protein kinase that acts as a scaffold protein. Functions as an effector of the small GTPase RND2, which stimulates RhoA activity and inhibits NGF-induced neurite outgrowth. Promotes Src family kinase (SFK) signaling by regulating the subcellular localization of CSK, a negative regulator of these kinases, leading to the regulation of cell morphology and motility by a CSK-dependent mechanism. Acts as a critical coactivator of Notch signaling. This chain is Inactive tyrosine-protein kinase PRAG1, found in Mus musculus (Mouse).